Here is a 403-residue protein sequence, read N- to C-terminus: Phosphopentomutase (403 aa).

The Mn(2+) site is built by Asp13, Asp298, His303, Asp339, His340, and His351.

The protein belongs to the phosphopentomutase family. The cofactor is Mn(2+).

Its subcellular location is the cytoplasm. The enzyme catalyses 2-deoxy-alpha-D-ribose 1-phosphate = 2-deoxy-D-ribose 5-phosphate. The catalysed reaction is alpha-D-ribose 1-phosphate = D-ribose 5-phosphate. It participates in carbohydrate degradation; 2-deoxy-D-ribose 1-phosphate degradation; D-glyceraldehyde 3-phosphate and acetaldehyde from 2-deoxy-alpha-D-ribose 1-phosphate: step 1/2. In terms of biological role, isomerase that catalyzes the conversion of deoxy-ribose 1-phosphate (dRib-1-P) and ribose 1-phosphate (Rib-1-P) to deoxy-ribose 5-phosphate (dRib-5-P) and ribose 5-phosphate (Rib-5-P), respectively. The chain is Phosphopentomutase from Streptococcus pyogenes serotype M18 (strain MGAS8232).